The chain runs to 440 residues: Ran-specific GTPase-activating protein 30 (440 aa).

The 314-residue stretch at 1 to 314 (MDEILAKAGS…LVLKIDRSDD (314 aa)) folds into the RanBD1 domain. Thr272 carries the phosphothreonine modification. Positions 341 to 371 (IEEDEEEDEEEDEEEGKDGEERKEEEEEENK) are enriched in acidic residues. The disordered stretch occupies residues 341–375 (IEEDEEEDEEEDEEEGKDGEERKEEEEEENKLEDK).

In terms of assembly, interacts with GSP1.

The protein localises to the cytoplasm. It is found in the nucleus. Its function is as follows. Important for the export of protein containing nuclear export signal (NES) out of the nucleus. Stimulates the GTPase activity of GSP1. This chain is Ran-specific GTPase-activating protein 30 (YRB30), found in Saccharomyces cerevisiae (strain ATCC 204508 / S288c) (Baker's yeast).